A 94-amino-acid polypeptide reads, in one-letter code: Pyrimidine/purine nucleoside phosphorylase (94 aa).

Belongs to the nucleoside phosphorylase PpnP family.

The enzyme catalyses a purine D-ribonucleoside + phosphate = a purine nucleobase + alpha-D-ribose 1-phosphate. The catalysed reaction is adenosine + phosphate = alpha-D-ribose 1-phosphate + adenine. It catalyses the reaction cytidine + phosphate = cytosine + alpha-D-ribose 1-phosphate. It carries out the reaction guanosine + phosphate = alpha-D-ribose 1-phosphate + guanine. The enzyme catalyses inosine + phosphate = alpha-D-ribose 1-phosphate + hypoxanthine. The catalysed reaction is thymidine + phosphate = 2-deoxy-alpha-D-ribose 1-phosphate + thymine. It catalyses the reaction uridine + phosphate = alpha-D-ribose 1-phosphate + uracil. It carries out the reaction xanthosine + phosphate = alpha-D-ribose 1-phosphate + xanthine. Its function is as follows. Catalyzes the phosphorolysis of diverse nucleosides, yielding D-ribose 1-phosphate and the respective free bases. Can use uridine, adenosine, guanosine, cytidine, thymidine, inosine and xanthosine as substrates. Also catalyzes the reverse reactions. This is Pyrimidine/purine nucleoside phosphorylase from Vibrio parahaemolyticus serotype O3:K6 (strain RIMD 2210633).